The primary structure comprises 380 residues: DNA replication and repair protein RecF (380 aa).

30–37 (GPNGFGKT) contributes to the ATP binding site.

It belongs to the RecF family.

The protein resides in the cytoplasm. Its function is as follows. The RecF protein is involved in DNA metabolism; it is required for DNA replication and normal SOS inducibility. RecF binds preferentially to single-stranded, linear DNA. It also seems to bind ATP. The protein is DNA replication and repair protein RecF of Mycobacterium sp. (strain KMS).